A 66-amino-acid chain; its full sequence is U-limacoditoxin(59)-Dv128 (66 aa).

A signal peptide spans 1–20 (MRHLLVLLLICLSVIAMAQA). The segment at 21-66 (TFGGGLGGAVGGRRRRDIGGGLGGAVGGRRRRDIGGGLGGAVGGKS) is 3 X 16 AA tandem repeats of [FI]-G-G-G-L-G-G-A-V-G-G-R-R-R-R-D. A run of 2 repeats spans residues 22-37 (FGGG…RRRD) and 38-53 (IGGG…RRRD). Glycine amide is present on glycine 31. Residues 33 to 37 (RRRRD) constitute a propeptide that is removed on maturation. A Glycine amide modification is found at glycine 47. The propeptide occupies 49–53 (RRRRD). One copy of the 3; half-length repeat lies at 54-64 (IGGGLGGAVGG).

Belongs to the limacoditoxin-59 family. Expressed by the venom secretory cell of the spine. The spine is a cuticular structure containing a single large nucleated venom-secreting cell at its base. It is an independent unit capable of producing, storing and injecting venom. On the back of D.vulnerans caterpillars, spines are grouped together by 50 to 100 to form scoli, of which there are eight in D.vulnerans.

Its subcellular location is the secreted. Functionally, probable toxin. This chain is U-limacoditoxin(59)-Dv128, found in Doratifera vulnerans (Mottled cup moth).